Consider the following 367-residue polypeptide: Histone RNA hairpin-binding protein (367 aa).

Positions 1–12 are enriched in polar residues; sequence MAQKTPTKGTRS. Disordered stretches follow at residues 1–24 and 49–200; these read MAQK…SPIK and EVTE…HWEE. Positions 57 to 73 are enriched in basic and acidic residues; that stretch reads LASRLEEERRCKSESRR. Positions 147 to 156 are enriched in polar residues; sequence SNASTINEGA. The segment covering 183–192 has biased composition (low complexity); the sequence is SDSSSVASSP. The interval 206–275 is RNA-binding; sequence CTDEAVLKRR…KWKRSLYEYC (70 aa). The disordered stretch occupies residues 342–367; the sequence is MDESTLKASTNTDPSAPTDFSKMSSH. The segment covering 347-356 has biased composition (polar residues); that stretch reads LKASTNTDPS.

The protein belongs to the SLBP family. In terms of processing, ubiquitinated by the CBC(fem-1) (Cul2-ElonginB-ElonginC) E3 ubiquitin-protein ligase complex, leading to its degradation.

Involved in histone pre-mRNA 3' processing. Required for chromosome condensation, progression of cell death and morphogenesis. The sequence is that of Histone RNA hairpin-binding protein (cdl-1) from Caenorhabditis elegans.